Consider the following 527-residue polypeptide: Organic cation/carnitine transporter 2 (527 aa).

Topologically, residues 1–27 are cytoplasmic; the sequence is MAEPTQPLLTDSNSSSPRSLDDTIESY. The helical transmembrane segment at 28 to 48 threads the bilayer; the sequence is IGSFGWAQFLQAALVSFSGVF. The Extracellular portion of the chain corresponds to 49–119; the sequence is DAQQTFISVF…SFVKGLPESS (71 aa). A helical transmembrane segment spans residues 120–140; that stretch reads FFVGCLIGGLVLSTLADSSLG. Topologically, residues 141–149 are cytoplasmic; sequence RKNMLFLSC. A helical membrane pass occupies residues 150-170; the sequence is LVMAISTMLTVFSPNIWVYAV. The Extracellular portion of the chain corresponds to 171 to 176; sequence LRFVNG. The chain crosses the membrane as a helical span at residues 177–195; sequence FGRATIGTCALVLSTELVG. ATP is bound at residue 190 to 197; the sequence is STELVGKK. The Cytoplasmic portion of the chain corresponds to 196–201; that stretch reads KKWRGR. The chain crosses the membrane as a helical span at residues 202–222; the sequence is VGIMSFFGFMLGFLSLPLMAY. Residues 223 to 230 lie on the Extracellular side of the membrane; that stretch reads MNRGSSWR. A helical transmembrane segment spans residues 231–251; it reads ILYAWTSIPTIIYCVLVRFFV. Residues 252 to 326 are Cytoplasmic-facing; that stretch reads CESPRWLFVR…LVEKRWALKR (75 aa). The helical transmembrane segment at 327–347 threads the bilayer; that stretch reads LSAVMAIAFGIGLVYYGMPLA. The Extracellular portion of the chain corresponds to 348–356; sequence LSNLDFNIY. Residues 357–377 form a helical membrane-spanning segment; it reads LSAAFNALMDLPANLITLFLV. Residues 378 to 385 are Cytoplasmic-facing; the sequence is DKLSRRNA. A helical membrane pass occupies residues 386 to 406; the sequence is LIGFTALGGVSSVLIFALHNM. The Extracellular portion of the chain corresponds to 407–415; it reads RIGNHGALQ. The chain crosses the membrane as a helical span at residues 416–436; the sequence is LALELISYFSACSAFNMEMIY. At 437 to 448 the chain is on the cytoplasmic side; that stretch reads TIELFPTCVRNS. The chain crosses the membrane as a helical span at residues 449–469; sequence AIAMARQALVLGGVFSPIMVA. Over 470–475 the chain is Extracellular; that stretch reads AGRKNA. The helical transmembrane segment at 476–496 threads the bilayer; it reads FWSFGLFGLAIGLLGLFAVGL. The Cytoplasmic portion of the chain corresponds to 497-527; that stretch reads PETRGSDLCDTMDEEECKDRRSKVAVNNVIA.

It belongs to the major facilitator (TC 2.A.1) superfamily. Organic cation transporter (TC 2.A.1.19) family. As to expression, weakly expressed in roots, including tips and initiation site of lateral roots, siliques and flowers, especially in pollen and stigma.

The protein localises to the vacuole membrane. Its function is as follows. High affinity carnitine transporter involved in the active cellular uptake of carnitine. Also transports organic cations. In Arabidopsis thaliana (Mouse-ear cress), this protein is Organic cation/carnitine transporter 2 (OCT2).